Consider the following 216-residue polypeptide: Superoxide dismutase [Mn], mitochondrial (216 aa).

The N-terminal 18 residues, 1-18 (MSFLNRNLSRTIKAAVRG), are a transit peptide targeting the mitochondrion. Histidine 44, histidine 92, aspartate 176, and histidine 180 together coordinate Mn(2+).

It belongs to the iron/manganese superoxide dismutase family. Mn(2+) serves as cofactor.

The protein resides in the mitochondrion matrix. It carries out the reaction 2 superoxide + 2 H(+) = H2O2 + O2. Functionally, destroys superoxide anion radicals which are normally produced within the cells and which are toxic to biological systems. This Glossina morsitans morsitans (Savannah tsetse fly) protein is Superoxide dismutase [Mn], mitochondrial (Sod2).